The chain runs to 244 residues: uncharacterized protein (244 aa).

The next 4 helical transmembrane spans lie at 20–42 (TITA…VVLI), 49–67 (FVYI…ATKV), 82–101 (TPSI…ASVF), and 108–125 (AFLV…ATPI).

Its subcellular location is the cell membrane. This is an uncharacterized protein from Archaeoglobus fulgidus (strain ATCC 49558 / DSM 4304 / JCM 9628 / NBRC 100126 / VC-16).